The sequence spans 403 residues: Metacaspase-1 (403 aa).

A disordered region spans residues M1–N95. Residues Y13 to N22 show a composition bias toward pro residues. Low complexity-rich tracts occupy residues N23–Y34 and Q49–P62. Catalysis depends on residues H193 and C249.

It belongs to the peptidase C14B family.

Its function is as follows. Involved in cell death (apoptosis). This is Metacaspase-1 (MCA1) from Scheffersomyces stipitis (strain ATCC 58785 / CBS 6054 / NBRC 10063 / NRRL Y-11545) (Yeast).